We begin with the raw amino-acid sequence, 542 residues long: Organic anion transporter 3 (542 aa).

Topologically, residues 1–9 (MTFSEILDR) are cytoplasmic. S4 carries the post-translational modification Phosphoserine. The helical transmembrane segment at 10–30 (VGSMGHFQFLHVAILGLPILN) threads the bilayer. At 31-123 (MANHNLLQIF…LVCNSNKLKE (93 aa)) the chain is on the extracellular side. N-linked (GlcNAc...) asparagine glycosylation is found at N86 and N102. Residues 124 to 144 (MAQSIFMAGILIGGLVLGDLS) traverse the membrane as a helical segment. At 145-154 (DRFGRRPILT) the chain is on the cytoplasmic side. Residues 155–175 (CSYLLLAASGSGAAFSPTFPI) traverse the membrane as a helical segment. Y176 is a topological domain (extracellular). The chain crosses the membrane as a helical span at residues 177 to 197 (MVFRFLCGFGISGITLSTVIL). The Cytoplasmic segment spans residues 198–212 (NVEWVPTRMRAIMST). A helical membrane pass occupies residues 213-233 (ALGYCYTFGQFILPGLAYAIP). Topologically, residues 234 to 236 (QWR) are extracellular. A helical transmembrane segment spans residues 237–257 (WLQLTVSIPFFVFFLSSWWTP). At 258-327 (ESIRWLVLSG…FRIPMLRRMT (70 aa)) the chain is on the cytoplasmic side. Residues 328–348 (FCLSLAWFATGFAYYSLAMGV) traverse the membrane as a helical segment. The Extracellular segment spans residues 349 to 354 (EEFGVN). A helical transmembrane segment spans residues 355-375 (LYILQIIFGGVDVPAKFITIL). Residues 376 to 386 (SLSYLGRHTTQ) lie on the Cytoplasmic side of the membrane. A helical transmembrane segment spans residues 387–407 (AAALLLAGGAILALTFVPLDL). The Extracellular segment spans residues 408–411 (QTVR). A helical transmembrane segment spans residues 412–432 (TVLAVFGKGCLSSSFSCLFLY). Residues 433–471 (TSELYPTVIRQTGMGVSNLWTRVGSMVSPLVKITGEVQP) lie on the Cytoplasmic side of the membrane. The chain crosses the membrane as a helical span at residues 472-492 (FIPNIIYGITALLGGSAALFL). The Extracellular portion of the chain corresponds to 493-542 (PETLNQPLPETIEDLENWSLRAKKPKQEPEVEKASQRIPLQPHGPGLGSS). The segment at 515–542 (KKPKQEPEVEKASQRIPLQPHGPGLGSS) is disordered. A compositionally biased stretch (basic and acidic residues) spans 517-527 (PKQEPEVEKAS).

It belongs to the major facilitator (TC 2.A.1) superfamily. Organic cation transporter (TC 2.A.1.19) family. As to expression, strongly expressed in kidney. Weaker expression in brain and skeletal muscle. Expressed in adrenal glands.

Its subcellular location is the basolateral cell membrane. The enzyme catalyses estrone 3-sulfate(out) + glutarate(in) = estrone 3-sulfate(in) + glutarate(out). It carries out the reaction estrone 3-sulfate(in) + 2-oxoglutarate(out) = estrone 3-sulfate(out) + 2-oxoglutarate(in). It catalyses the reaction glutarate(in) + 2-oxoglutarate(out) = glutarate(out) + 2-oxoglutarate(in). The catalysed reaction is urate(in) + 2-oxoglutarate(out) = urate(out) + 2-oxoglutarate(in). The enzyme catalyses taurocholate(out) + glutarate(in) = taurocholate(in) + glutarate(out). It carries out the reaction dehydroepiandrosterone 3-sulfate(out) + glutarate(in) = dehydroepiandrosterone 3-sulfate(in) + glutarate(out). It catalyses the reaction prostaglandin F2alpha(out) + glutarate(in) = prostaglandin F2alpha(in) + glutarate(out). The catalysed reaction is prostaglandin F2alpha(out) + 2-oxoglutarate(in) = prostaglandin F2alpha(in) + 2-oxoglutarate(out). The enzyme catalyses (R)-carnitine(out) + 2-oxoglutarate(in) = (R)-carnitine(in) + 2-oxoglutarate(out). It carries out the reaction glutarate(in) + (R)-carnitine(out) = glutarate(out) + (R)-carnitine(in). It catalyses the reaction prostaglandin E2(out) + 2-oxoglutarate(in) = prostaglandin E2(in) + 2-oxoglutarate(out). The catalysed reaction is prostaglandin E2(out) + glutarate(in) = prostaglandin E2(in) + glutarate(out). The enzyme catalyses urate(in) + glutarate(out) = urate(out) + glutarate(in). It carries out the reaction taurocholate(out) + 2-oxoglutarate(in) = taurocholate(in) + 2-oxoglutarate(out). It catalyses the reaction dehydroepiandrosterone 3-sulfate(out) + 2-oxoglutarate(in) = dehydroepiandrosterone 3-sulfate(in) + 2-oxoglutarate(out). The catalysed reaction is kynurenate(out) + a dicarboxylate(in) = kynurenate(in) + a dicarboxylate(out). The enzyme catalyses (indol-3-yl)acetate(out) + a dicarboxylate(in) = (indol-3-yl)acetate(in) + a dicarboxylate(out). It carries out the reaction indoxyl sulfate(out) + a dicarboxylate(in) = indoxyl sulfate(in) + a dicarboxylate(out). It catalyses the reaction N-benzoylglycine(out) + a dicarboxylate(in) = N-benzoylglycine(in) + a dicarboxylate(out). The catalysed reaction is 3-carboxy-4-methyl-5-propyl-2-furanpropanoate(out) + a dicarboxylate(in) = 3-carboxy-4-methyl-5-propyl-2-furanpropanoate(in) + a dicarboxylate(out). The enzyme catalyses (6R)-L-erythro-5,6,7,8-tetrahydrobiopterin(out) + a dicarboxylate(in) = (6R)-L-erythro-5,6,7,8-tetrahydrobiopterin(in) + a dicarboxylate(out). It carries out the reaction L-erythro-7,8-dihydrobiopterin(out) + a dicarboxylate(in) = L-erythro-7,8-dihydrobiopterin(in) + a dicarboxylate(out). It catalyses the reaction L-sepiapterin(out) + a dicarboxylate(in) = L-sepiapterin(in) + a dicarboxylate(out). In terms of biological role, functions as an organic anion/dicarboxylate exchanger that couples organic anion uptake indirectly to the sodium gradient. Transports organic anions such as estrone 3-sulfate (E1S) and urate in exchange for dicarboxylates such as glutarate or ketoglutarate (2-oxoglutarate). Plays an important role in the excretion of endogenous and exogenous organic anions, especially from the kidney and the brain. E1S transport is pH- and chloride-dependent and may also involve E1S/cGMP exchange. Responsible for the transport of prostaglandin E2 (PGE2) and prostaglandin F2(alpha) (PGF2(alpha)) in the basolateral side of the renal tubule. Involved in the transport of neuroactive tryptophan metabolites kynurenate and xanthurenate. Functions as a biopterin transporters involved in the uptake and the secretion of coenzymes tetrahydrobiopterin (BH4), dihydrobiopterin (BH2) and sepiapterin to urine, thereby determining baseline levels of blood biopterins. May be involved in the basolateral transport of steviol, a metabolite of the popular sugar substitute stevioside. May participate in the detoxification/ renal excretion of drugs and xenobiotics, such as the histamine H(2)-receptor antagonists fexofenadine and cimetidine, the antibiotic benzylpenicillin (PCG), the anionic herbicide 2,4-dichloro-phenoxyacetate (2,4-D), the diagnostic agent p-aminohippurate (PAH), the antiviral acyclovir (ACV), and the mycotoxin ochratoxin (OTA), by transporting these exogenous organic anions across the cell membrane in exchange for dicarboxylates such as 2-oxoglutarate. Contributes to the renal uptake of potent uremic toxins (indoxyl sulfate (IS), indole acetate (IA), hippurate/N-benzoylglycine (HA) and 3-carboxy-4-methyl-5-propyl-2-furanpropionate (CMPF)), pravastatin, PCG, E1S and dehydroepiandrosterone sulfate (DHEAS), and is partly involved in the renal uptake of temocaprilat (an angiotensin-converting enzyme (ACE) inhibitor). May contribute to the release of cortisol in the adrenals. Involved in one of the detoxification systems on the choroid plexus (CP), removes substrates such as E1S or taurocholate (TC), PCG, 2,4-D and PAH, from the cerebrospinal fluid (CSF) to the blood for eventual excretion in urine and bile. Also contributes to the uptake of several other organic compounds such as the prostanoids prostaglandin E(2) and prostaglandin F(2-alpha), L-carnitine, and the therapeutic drugs allopurinol, 6-mercaptopurine (6-MP) and 5-fluorouracil (5-FU). Mediates the transport of PAH, PCG, and the statins pravastatin and pitavastatin, from the cerebrum into the blood circulation across the blood-brain barrier (BBB). In summary, plays a role in the efflux of drugs and xenobiotics, helping reduce their undesired toxicological effects on the body. This chain is Organic anion transporter 3, found in Homo sapiens (Human).